The primary structure comprises 471 residues: Alpha-amylase (471 aa).

A Pyrrolidone carboxylic acid modification is found at Gln1. A disulfide bridge connects residues Cys28 and Cys84. Ca(2+)-binding residues include Asn98, Arg146, and Asp155. Cys134 and Cys148 are disulfide-bonded. Arg183 contributes to the chloride binding site. Asp185 acts as the Nucleophile in catalysis. His189 is a binding site for Ca(2+). Glu222 functions as the Proton donor in the catalytic mechanism. Chloride-binding residues include Asn285 and Arg321. Positions 326 to 343 are enriched in polar residues; the sequence is FDFTDNDQGPPQDGSGNL. The segment at 326-346 is disordered; sequence FDFTDNDQGPPQDGSGNLISP. Cystine bridges form between Cys354/Cys360 and Cys425/Cys437.

Belongs to the glycosyl hydrolase 13 family. As to quaternary structure, monomer. Requires Ca(2+) as cofactor. Chloride serves as cofactor.

The enzyme catalyses Endohydrolysis of (1-&gt;4)-alpha-D-glucosidic linkages in polysaccharides containing three or more (1-&gt;4)-alpha-linked D-glucose units.. The chain is Alpha-amylase from Tenebrio molitor (Yellow mealworm beetle).